The sequence spans 264 residues: 3-methyl-2-oxobutanoate hydroxymethyltransferase (264 aa).

Positions 45 and 84 each coordinate Mg(2+). 3-methyl-2-oxobutanoate contacts are provided by residues D45 to S46, D84, and K112. E114 contributes to the Mg(2+) binding site. E181 (proton acceptor) is an active-site residue.

The protein belongs to the PanB family. Homodecamer; pentamer of dimers. Requires Mg(2+) as cofactor.

The protein resides in the cytoplasm. It catalyses the reaction 3-methyl-2-oxobutanoate + (6R)-5,10-methylene-5,6,7,8-tetrahydrofolate + H2O = 2-dehydropantoate + (6S)-5,6,7,8-tetrahydrofolate. Its pathway is cofactor biosynthesis; (R)-pantothenate biosynthesis; (R)-pantoate from 3-methyl-2-oxobutanoate: step 1/2. Catalyzes the reversible reaction in which hydroxymethyl group from 5,10-methylenetetrahydrofolate is transferred onto alpha-ketoisovalerate to form ketopantoate. This chain is 3-methyl-2-oxobutanoate hydroxymethyltransferase, found in Colwellia psychrerythraea (strain 34H / ATCC BAA-681) (Vibrio psychroerythus).